A 57-amino-acid chain; its full sequence is Ribosome modulation factor 2 (57 aa).

The disordered stretch occupies residues Met1–Lys24.

This sequence belongs to the ribosome modulation factor family.

It localises to the cytoplasm. Its function is as follows. During stationary phase, converts 70S ribosomes to an inactive dimeric form (100S ribosomes). This chain is Ribosome modulation factor 2, found in Colwellia psychrerythraea (strain 34H / ATCC BAA-681) (Vibrio psychroerythus).